The primary structure comprises 348 residues: Spermidine/putrescine import ATP-binding protein PotA (348 aa).

The 231-residue stretch at 6-236 folds into the ABC transporter domain; it reads IRLVNVTKEY…PKNVFVADFI (231 aa). 38–45 is a binding site for ATP; the sequence is GPSGCGKT.

It belongs to the ABC transporter superfamily. Spermidine/putrescine importer (TC 3.A.1.11.1) family. The complex is composed of two ATP-binding proteins (PotA), two transmembrane proteins (PotB and PotC) and a solute-binding protein (PotD).

The protein localises to the cell membrane. It carries out the reaction ATP + H2O + polyamine-[polyamine-binding protein]Side 1 = ADP + phosphate + polyamineSide 2 + [polyamine-binding protein]Side 1.. In terms of biological role, part of the ABC transporter complex PotABCD involved in spermidine/putrescine import. Responsible for energy coupling to the transport system. This chain is Spermidine/putrescine import ATP-binding protein PotA, found in Desulfitobacterium hafniense (strain Y51).